Consider the following 330-residue polypeptide: Olfactory receptor 11H6 (330 aa).

The Extracellular segment spans residues 1–43 (MFFIIHSLVTSVFLTALGPQNRTMHFVTEFVLLGFHGQREMQS). N-linked (GlcNAc...) asparagine glycosylation occurs at asparagine 21. The helical transmembrane segment at 44 to 64 (CFFSFILVLYLLTLLGNGAIV) threads the bilayer. At 65–72 (CAVKLDRR) the chain is on the cytoplasmic side. Residues 73-93 (LHTPMYILLGNFAFLEIWYIS) traverse the membrane as a helical segment. Over 94–117 (STVPNMLVNILSEIKTISFSGCFL) the chain is Extracellular. Cysteine 115 and cysteine 207 are disulfide-bonded. The helical transmembrane segment at 118 to 138 (QFYFFFSLGTTECFFLSVMAY) threads the bilayer. Residues 139–157 (DRYLAICRPLHYPSIMTGK) lie on the Cytoplasmic side of the membrane. A helical membrane pass occupies residues 158-178 (FCIILVCVCWVGGFLCYPVPI). Residues 179–215 (VLISQLPFCGPNIIDHLVCDPGPLFALACISAPSTEL) are Extracellular-facing. Residues 216–235 (ICYTFNSMIIFGPFLSILGS) form a helical membrane-spanning segment. Topologically, residues 236-255 (YTLVIRAVLCIPSGAGRTKA) are cytoplasmic. The chain crosses the membrane as a helical span at residues 256–276 (FSTCGSHLMVVSLFYGTLMVM). The Extracellular segment spans residues 277 to 289 (YVSPTSGNPAGMQ). Residues 290 to 310 (KIITLVYTAMTPFLNPLIYSL) traverse the membrane as a helical segment. The Cytoplasmic segment spans residues 311 to 330 (RNKDMKDALKRVLGLTVSQN).

It belongs to the G-protein coupled receptor 1 family.

It is found in the cell membrane. In terms of biological role, odorant receptor. The protein is Olfactory receptor 11H6 (OR11H6) of Homo sapiens (Human).